The sequence spans 146 residues: Small ribosomal subunit protein uS5 (146 aa).

The region spanning 8–71 (FQEAIVKIGR…DDAFKSLVTV (64 aa)) is the S5 DRBM domain.

Belongs to the universal ribosomal protein uS5 family. In terms of assembly, part of the 30S ribosomal subunit. Contacts proteins S4 and S8.

In terms of biological role, with S4 and S12 plays an important role in translational accuracy. Functionally, located at the back of the 30S subunit body where it stabilizes the conformation of the head with respect to the body. This is Small ribosomal subunit protein uS5 from Aliarcobacter butzleri (strain RM4018) (Arcobacter butzleri).